The following is a 373-amino-acid chain: 3-isopropylmalate dehydrogenase gloI (373 aa).

Positions 92, 98, and 108 each coordinate substrate. Mg(2+) contacts are provided by D228, D253, and D257. Residues 294-300 (HGSAPDI) and N307 each bind NADP(+).

It belongs to the isocitrate and isopropylmalate dehydrogenases family. Homodimer. Requires Mg(2+) as cofactor. Mn(2+) is required as a cofactor.

It catalyses the reaction (2R,3S)-3-isopropylmalate + NAD(+) = 4-methyl-2-oxopentanoate + CO2 + NADH. The protein operates within mycotoxin biosynthesis. 3-isopropylmalate dehydrogenase; part of the gene cluster that mediates the biosynthesis of pneumocandins, lipohexapeptides of the echinocandin family that prevent fungal cell wall formation by non-competitive inhibition of beta-1,3-glucan synthase. The 10,12-dimethylmyristoyl side chain is synthesized by the reducing polyketide synthase gloL/GLPKS4. The thioesterase gloN/GLHYD exclusively interacts with gloL/GLPKS4 to maintain turnover of the polyketide side chain. The 10R,12S-dimethylmyristic acid is then transferred to the first thiolation domain of the nonribosomal peptide synthetase gloA/GLNRPS4 by the acyl-AMP ligase gloD/GLligase, followed by its acylation to L-ornithine to trigger elongation of the cyclic hexapeptide. L-ornithine, 4R-hydroxyl-L-proline (generated from L-proline by the dioxygenase gloF/GLOXY2), 3S-hydroxyl-L-homotyrosine (generated by gloG/GLHtyB, gloH/GLHtyA, gloI/GLHtyC, gloJ/GLHtyD and hydroxylated at C-3 by the dioxygenase gloM/GLOXY1), 3R-hydroxyl-L-glutamine (generated from L-glutamine probably by the dioxygenase gloE/GLOXY3) and 3S-hydroxyl-L-proline (generated from L-proline by the dioxygenase gloF/GLOXY2 to yield pneumocandin B0), or 3S-hydroxyl-4S-methyl-L-proline (generated from L-leucine by the dioxygenase gloC/GLOXY4 to yield pneumocandin A0) are sequentially added to the growing chain. The last C domain of gloA/GLNRPS4 is proposed to be responsible for cyclization by condensation to form the peptide bond between L-ornithine and 3S-hydroxyl-4S-methyl-L-proline (for pneumocandin A0) or 3S-hydroxyl-L-proline (for pneumocandin B0). Finally, the subsequent C-4 hydroxylation of 3S-hydroxyl-L-homotyrosine and L-ornithine dihydroxylation at C-4 and C-5 are performed by the cytochrome P450 monooxygenases gloP/GLP450-1 and gloO/GLP450-2, respectively. The polypeptide is 3-isopropylmalate dehydrogenase gloI (Glarea lozoyensis (strain ATCC 20868 / MF5171)).